Reading from the N-terminus, the 626-residue chain is DNA polymerase 2 (626 aa).

The protein belongs to the DNA polymerase type-B family.

The catalysed reaction is DNA(n) + a 2'-deoxyribonucleoside 5'-triphosphate = DNA(n+1) + diphosphate. In terms of biological role, this polymerase is devoid of exonuclease activity. The protein is DNA polymerase 2 (dpo2) of Saccharolobus solfataricus (strain ATCC 35092 / DSM 1617 / JCM 11322 / P2) (Sulfolobus solfataricus).